The chain runs to 495 residues: Cobyric acid synthase (495 aa).

The GATase cobBQ-type domain maps to Lys-253 to Phe-446. Catalysis depends on Cys-334, which acts as the Nucleophile. His-438 is an active-site residue.

Belongs to the CobB/CobQ family. CobQ subfamily.

It participates in cofactor biosynthesis; adenosylcobalamin biosynthesis. Catalyzes amidations at positions B, D, E, and G on adenosylcobyrinic A,C-diamide. NH(2) groups are provided by glutamine, and one molecule of ATP is hydrogenolyzed for each amidation. This chain is Cobyric acid synthase, found in Chlorobium phaeobacteroides (strain BS1).